The chain runs to 656 residues: Exoribonuclease 2 (656 aa).

The 329-residue stretch at 190–518 (RSDLTKTPFF…LNHRLIKSVL (329 aa)) folds into the RNB domain. In terms of domain architecture, S1 motif spans 564 to 649 (KWRYKAEIFD…ESGQLIGKLA (86 aa)).

Belongs to the RNR ribonuclease family. RNase II subfamily.

Its subcellular location is the cytoplasm. It catalyses the reaction Exonucleolytic cleavage in the 3'- to 5'-direction to yield nucleoside 5'-phosphates.. In terms of biological role, involved in mRNA degradation. Hydrolyzes single-stranded polyribonucleotides processively in the 3' to 5' direction. This is Exoribonuclease 2 from Psychromonas ingrahamii (strain DSM 17664 / CCUG 51855 / 37).